Reading from the N-terminus, the 206-residue chain is Holliday junction branch migration complex subunit RuvA (206 aa).

The domain I stretch occupies residues 1-64 (MIGRLRGNLL…EDAQLLYGFN (64 aa)). Positions 65–143 (TKKERALFRE…GWGAGDLFTP (79 aa)) are domain II. The tract at residues 144–157 (ADTTSMDDASDLIS) is flexible linker. A domain III region spans residues 158–206 (SPQSAQDEAVSALISLGYKPVQASKMVSQVAKPDMTSESLIRESLKSMI).

This sequence belongs to the RuvA family. As to quaternary structure, homotetramer. Forms an RuvA(8)-RuvB(12)-Holliday junction (HJ) complex. HJ DNA is sandwiched between 2 RuvA tetramers; dsDNA enters through RuvA and exits via RuvB. An RuvB hexamer assembles on each DNA strand where it exits the tetramer. Each RuvB hexamer is contacted by two RuvA subunits (via domain III) on 2 adjacent RuvB subunits; this complex drives branch migration. In the full resolvosome a probable DNA-RuvA(4)-RuvB(12)-RuvC(2) complex forms which resolves the HJ.

Its subcellular location is the cytoplasm. Functionally, the RuvA-RuvB-RuvC complex processes Holliday junction (HJ) DNA during genetic recombination and DNA repair, while the RuvA-RuvB complex plays an important role in the rescue of blocked DNA replication forks via replication fork reversal (RFR). RuvA specifically binds to HJ cruciform DNA, conferring on it an open structure. The RuvB hexamer acts as an ATP-dependent pump, pulling dsDNA into and through the RuvAB complex. HJ branch migration allows RuvC to scan DNA until it finds its consensus sequence, where it cleaves and resolves the cruciform DNA. The protein is Holliday junction branch migration complex subunit RuvA of Aliivibrio salmonicida (strain LFI1238) (Vibrio salmonicida (strain LFI1238)).